The sequence spans 344 residues: Phenylalanine--tRNA ligase alpha subunit (344 aa).

Glu-255 provides a ligand contact to Mg(2+).

This sequence belongs to the class-II aminoacyl-tRNA synthetase family. Phe-tRNA synthetase alpha subunit type 1 subfamily. In terms of assembly, tetramer of two alpha and two beta subunits. Mg(2+) serves as cofactor.

It is found in the cytoplasm. The enzyme catalyses tRNA(Phe) + L-phenylalanine + ATP = L-phenylalanyl-tRNA(Phe) + AMP + diphosphate + H(+). This chain is Phenylalanine--tRNA ligase alpha subunit, found in Cytophaga hutchinsonii (strain ATCC 33406 / DSM 1761 / CIP 103989 / NBRC 15051 / NCIMB 9469 / D465).